A 100-amino-acid chain; its full sequence is Aspartyl/glutamyl-tRNA(Asn/Gln) amidotransferase subunit C (100 aa).

It belongs to the GatC family. In terms of assembly, heterotrimer of A, B and C subunits.

The catalysed reaction is L-glutamyl-tRNA(Gln) + L-glutamine + ATP + H2O = L-glutaminyl-tRNA(Gln) + L-glutamate + ADP + phosphate + H(+). It catalyses the reaction L-aspartyl-tRNA(Asn) + L-glutamine + ATP + H2O = L-asparaginyl-tRNA(Asn) + L-glutamate + ADP + phosphate + 2 H(+). Its function is as follows. Allows the formation of correctly charged Asn-tRNA(Asn) or Gln-tRNA(Gln) through the transamidation of misacylated Asp-tRNA(Asn) or Glu-tRNA(Gln) in organisms which lack either or both of asparaginyl-tRNA or glutaminyl-tRNA synthetases. The reaction takes place in the presence of glutamine and ATP through an activated phospho-Asp-tRNA(Asn) or phospho-Glu-tRNA(Gln). This chain is Aspartyl/glutamyl-tRNA(Asn/Gln) amidotransferase subunit C, found in Streptococcus sanguinis (strain SK36).